Here is a 185-residue protein sequence, read N- to C-terminus: Threonylcarbamoyl-AMP synthase (185 aa).

Residues 4 to 185 form the YrdC-like domain; the sequence is SFRVQQAARE…LATGEVVRPG (182 aa).

This sequence belongs to the SUA5 family. TsaC subfamily.

It localises to the cytoplasm. The catalysed reaction is L-threonine + hydrogencarbonate + ATP = L-threonylcarbamoyladenylate + diphosphate + H2O. Required for the formation of a threonylcarbamoyl group on adenosine at position 37 (t(6)A37) in tRNAs that read codons beginning with adenine. Catalyzes the conversion of L-threonine, HCO(3)(-)/CO(2) and ATP to give threonylcarbamoyl-AMP (TC-AMP) as the acyladenylate intermediate, with the release of diphosphate. The protein is Threonylcarbamoyl-AMP synthase of Pseudomonas putida (strain ATCC 700007 / DSM 6899 / JCM 31910 / BCRC 17059 / LMG 24140 / F1).